Here is a 314-residue protein sequence, read N- to C-terminus: UDP-glucose 4-epimerase (314 aa).

NAD(+)-binding positions include 11 to 12 (FI), 31 to 36 (DNFATG), 56 to 57 (DI), and 77 to 81 (LAAQI). Substrate contacts are provided by Ser121 and Tyr146. The NAD(+) site is built by Tyr146 and Lys150. The Proton acceptor role is filled by Tyr146. Substrate-binding positions include Asn175, 189 to 190 (VV), 204 to 206 (RVF), Arg213, and 271 to 274 (RLGD).

This sequence belongs to the NAD(P)-dependent epimerase/dehydratase family. In terms of assembly, homodimer. The cofactor is NAD(+).

It catalyses the reaction UDP-alpha-D-glucose = UDP-alpha-D-galactose. It participates in carbohydrate metabolism; galactose metabolism. Functionally, involved in the metabolism of galactose. Catalyzes the conversion of UDP-galactose (UDP-Gal) to UDP-glucose (UDP-Glc) through a mechanism involving the transient reduction of NAD. This chain is UDP-glucose 4-epimerase (galE1), found in Mycobacterium tuberculosis (strain CDC 1551 / Oshkosh).